A 630-amino-acid polypeptide reads, in one-letter code: uncharacterized protein (630 aa).

4 helical membrane passes run 254–274, 504–524, 564–584, and 601–621; these read MFYA…ELRV, IALL…LTSI, MIFA…SMVF, and IIVI…AVLF.

Its subcellular location is the cell membrane. This is an uncharacterized protein from Mycoplasma genitalium (strain ATCC 33530 / DSM 19775 / NCTC 10195 / G37) (Mycoplasmoides genitalium).